The chain runs to 600 residues: Glutamine--fructose-6-phosphate aminotransferase [isomerizing] (600 aa).

The active-site Nucleophile; for GATase activity is the Cys-2. Residues 2-217 (CGIVGYIGNE…DEELVIVRRD (216 aa)) enclose the Glutamine amidotransferase type-2 domain. SIS domains follow at residues 283–422 (IRAA…AAGK) and 452–590 (IARD…VDKP). Lys-595 functions as the For Fru-6P isomerization activity in the catalytic mechanism.

Homodimer.

It is found in the cytoplasm. It catalyses the reaction D-fructose 6-phosphate + L-glutamine = D-glucosamine 6-phosphate + L-glutamate. In terms of biological role, catalyzes the first step in hexosamine metabolism, converting fructose-6P into glucosamine-6P using glutamine as a nitrogen source. In Shouchella clausii (strain KSM-K16) (Alkalihalobacillus clausii), this protein is Glutamine--fructose-6-phosphate aminotransferase [isomerizing].